The following is a 213-amino-acid chain: Phosphatidylethanolamine N-methyltransferase A (213 aa).

The Lumenal portion of the chain corresponds to 1–21 (MIVEHAIDYIDYLMNYVDFTE). Residues 22 to 42 (KYFLLTIACVVFNPTWWNITA) constitute an intramembrane region (helical). The Lumenal segment spans residues 43 to 54 (RMEYKTKFMTKI). The helical transmembrane segment at 55 to 75 (CGSKENGCYLLAFLIFSLGIL) threads the bilayer. At 76–102 (RDWLFSEALIRQPIFQEFDRFEVEVLS) the chain is on the cytoplasmic side. The helical transmembrane segment at 103-123 (YILYGFGGILVLAAYLKLGIT) threads the bilayer. 107-109 (GFG) lines the S-adenosyl-L-methionine pocket. Residues 124–166 (GTYLGDYFGILMKERVTGFPFNVMNNPMYNGSVMLFIAHALSY) are Lumenal-facing. A helical membrane pass occupies residues 167 to 187 (KSVAGLVLSFVVYVVYKFALI). Topologically, residues 188-213 (FEESFTNYIYSTAAANAAKKNKSKSK) are cytoplasmic. 189-190 (EE) provides a ligand contact to S-adenosyl-L-methionine.

The protein belongs to the class VI-like SAM-binding methyltransferase superfamily. PEMT/PEM2 methyltransferase family.

The protein resides in the endoplasmic reticulum membrane. It is found in the mitochondrion membrane. It carries out the reaction a 1,2-diacyl-sn-glycero-3-phospho-N-methylethanolamine + S-adenosyl-L-methionine = a 1,2-diacyl-sn-glycero-3-phospho-N,N-dimethylethanolamine + S-adenosyl-L-homocysteine + H(+). The enzyme catalyses a 1,2-diacyl-sn-glycero-3-phospho-N,N-dimethylethanolamine + S-adenosyl-L-methionine = a 1,2-diacyl-sn-glycero-3-phosphocholine + S-adenosyl-L-homocysteine + H(+). It catalyses the reaction a 1,2-diacyl-sn-glycero-3-phosphoethanolamine + S-adenosyl-L-methionine = a 1,2-diacyl-sn-glycero-3-phospho-N-methylethanolamine + S-adenosyl-L-homocysteine + H(+). The protein operates within phospholipid metabolism; phosphatidylcholine biosynthesis. Catalyzes the three sequential steps of the methylation pathway of phosphatidylcholine biosynthesis, the SAM-dependent methylation of phosphatidylethanolamine (PE) to phosphatidylmonomethylethanolamine (PMME), PMME to phosphatidyldimethylethanolamine (PDME), and PDME to phosphatidylcholine (PC). This Dictyostelium discoideum (Social amoeba) protein is Phosphatidylethanolamine N-methyltransferase A (pemtA).